The sequence spans 339 residues: Anthranilate phosphoribosyltransferase (339 aa).

5-phospho-alpha-D-ribose 1-diphosphate contacts are provided by residues G79, 82-83, S87, 89-92, 107-115, and S119; these read GD, NIST, and KHGNRSVSS. Anthranilate is bound at residue G79. S91 contributes to the Mg(2+) binding site. N110 is an anthranilate binding site. Residue R165 participates in anthranilate binding. Mg(2+) contacts are provided by D224 and E225.

Belongs to the anthranilate phosphoribosyltransferase family. As to quaternary structure, homodimer. It depends on Mg(2+) as a cofactor.

The enzyme catalyses N-(5-phospho-beta-D-ribosyl)anthranilate + diphosphate = 5-phospho-alpha-D-ribose 1-diphosphate + anthranilate. The protein operates within amino-acid biosynthesis; L-tryptophan biosynthesis; L-tryptophan from chorismate: step 2/5. Catalyzes the transfer of the phosphoribosyl group of 5-phosphorylribose-1-pyrophosphate (PRPP) to anthranilate to yield N-(5'-phosphoribosyl)-anthranilate (PRA). This is Anthranilate phosphoribosyltransferase from Exiguobacterium sibiricum (strain DSM 17290 / CCUG 55495 / CIP 109462 / JCM 13490 / 255-15).